A 72-amino-acid polypeptide reads, in one-letter code: Translation initiation factor IF-1 (72 aa).

One can recognise an S1-like domain in the interval 1-72; sequence MIKEDNIEMH…SKGRIIFRSR (72 aa).

This sequence belongs to the IF-1 family. In terms of assembly, component of the 30S ribosomal translation pre-initiation complex which assembles on the 30S ribosome in the order IF-2 and IF-3, IF-1 and N-formylmethionyl-tRNA(fMet); mRNA recruitment can occur at any time during PIC assembly.

The protein resides in the cytoplasm. Its function is as follows. One of the essential components for the initiation of protein synthesis. Stabilizes the binding of IF-2 and IF-3 on the 30S subunit to which N-formylmethionyl-tRNA(fMet) subsequently binds. Helps modulate mRNA selection, yielding the 30S pre-initiation complex (PIC). Upon addition of the 50S ribosomal subunit IF-1, IF-2 and IF-3 are released leaving the mature 70S translation initiation complex. This chain is Translation initiation factor IF-1, found in Blochmanniella floridana.